We begin with the raw amino-acid sequence, 91 residues long: Probable Fe(2+)-trafficking protein (91 aa).

This sequence belongs to the Fe(2+)-trafficking protein family. In terms of assembly, monomer.

Functionally, could be a mediator in iron transactions between iron acquisition and iron-requiring processes, such as synthesis and/or repair of Fe-S clusters in biosynthetic enzymes. The protein is Probable Fe(2+)-trafficking protein of Klebsiella pneumoniae (strain 342).